Reading from the N-terminus, the 166-residue chain is Peptidyl-prolyl cis-trans isomerase-like 1 (166 aa).

The PPIase cyclophilin-type domain maps to 10–164 (QPPNVYLETS…DDVKIIKAYP (155 aa)). Residues 54–65 (HRIIKDFMIQGG), 70–71 (TG), 99–104 (AMANAG), 109–113 (GSQFF), T119, and K125 each bind cyclosporin A. S149 carries the phosphoserine modification.

It belongs to the cyclophilin-type PPIase family. PPIL1 subfamily. As to quaternary structure, identified in the spliceosome C complex. Interacts with SNW1/SKIP. Interacts with CDC40/PRP17; this interaction leads to CDC40 isomerization. Interacts with RBM22.

Its subcellular location is the nucleus. The catalysed reaction is [protein]-peptidylproline (omega=180) = [protein]-peptidylproline (omega=0). Its activity is regulated as follows. Inhibited by Cyclosporin A. In terms of biological role, involved in pre-mRNA splicing as component of the spliceosome. PPIases accelerate the folding of proteins. It catalyzes the cis-trans isomerization of proline imidic peptide bonds in oligopeptides. Catalyzes prolyl peptide bond isomerization in CDC40/PRP17. Plays an important role in embryonic brain development; this function is independent of its isomerase activity. The protein is Peptidyl-prolyl cis-trans isomerase-like 1 (PPIL1) of Bos taurus (Bovine).